We begin with the raw amino-acid sequence, 505 residues long: Deoxyguanosinetriphosphate triphosphohydrolase (505 aa).

The 208-residue stretch at 66–273 folds into the HD domain; the sequence is RLTHSMEVQQ…MEAADDISYC (208 aa).

Belongs to the dGTPase family. Type 1 subfamily. Homotetramer. Mg(2+) is required as a cofactor.

The enzyme catalyses dGTP + H2O = 2'-deoxyguanosine + triphosphate + H(+). In terms of biological role, dGTPase preferentially hydrolyzes dGTP over the other canonical NTPs. In Escherichia coli O127:H6 (strain E2348/69 / EPEC), this protein is Deoxyguanosinetriphosphate triphosphohydrolase.